The sequence spans 132 residues: Large ribosomal subunit protein uL24 (132 aa).

This sequence belongs to the universal ribosomal protein uL24 family. Part of the 50S ribosomal subunit.

One of two assembly initiator proteins, it binds directly to the 5'-end of the 23S rRNA, where it nucleates assembly of the 50S subunit. Its function is as follows. Located at the polypeptide exit tunnel on the outside of the subunit. The chain is Large ribosomal subunit protein uL24 from Aeropyrum pernix (strain ATCC 700893 / DSM 11879 / JCM 9820 / NBRC 100138 / K1).